The following is a 711-amino-acid chain: Interferon-induced GTP-binding protein Mx2 (711 aa).

Disordered stretches follow at residues 1 to 26 and 62 to 88; these read MPKP…HKEM and MLTL…NLYS. Positions 66 to 82 are enriched in low complexity; the sequence is SPQQPGGKSGQQTSKGP. The Dynamin-type G domain occupies 112-383; it reads DLALPTIAVI…LIGHISKSLP (272 aa). Positions 122–129 are G1 motif; that stretch reads GDQSSGKS. 122 to 129 provides a ligand contact to GTP; that stretch reads GDQSSGKS. Residues 147 to 149 are G2 motif; sequence ITR. The tract at residues 221-224 is G3 motif; that stretch reads DLPG. GTP is bound by residues 221-225 and 290-293; these read DLPGI and TKPD. The G4 motif stretch occupies residues 290 to 293; that stretch reads TKPD. The tract at residues 322–325 is G5 motif; the sequence is KCRG. Positions 619–710 constitute a GED domain; it reads ITEIGVHVNA…TLSKFAQSLQ (92 aa).

The protein belongs to the TRAFAC class dynamin-like GTPase superfamily. Dynamin/Fzo/YdjA family. In terms of tissue distribution, ubiquitous.

It localises to the cytoplasm. The protein localises to the nucleus. Functionally, interferon-induced dynamin-like GTPase with antiviral activity against influenza virus A (FLUAV). The polypeptide is Interferon-induced GTP-binding protein Mx2 (MX2) (Sus scrofa (Pig)).